A 520-amino-acid polypeptide reads, in one-letter code: Dynein axonemal assembly factor 8 (520 aa).

4 disordered regions span residues 93–202 (PVLV…LRQE), 217–256 (RDAC…EGPP), 328–366 (CARK…QLAQ), and 388–520 (DHLS…LEQL). A compositionally biased stretch (basic and acidic residues) spans 111 to 125 (RTKDASSQEGRDPGR). Ser-161 bears the Phosphoserine mark. Ser-351 is modified (phosphoserine). The span at 401–410 (DSEEEEEEEM) shows a compositional bias: acidic residues. Over residues 420-437 (SPSSLGLRTCTGKSQLLQ) the composition is skewed to polar residues.

In terms of tissue distribution, expressed in respiratory ciliated cells (at protein level).

It localises to the dynein axonemal particle. It is found in the cytoplasm. Functionally, in cyliated cells, dynein axonemal particle-specific protein required for deployment of ODA to the axoneme. Interacts with outer dynein arm (ODA) subunits. This chain is Dynein axonemal assembly factor 8, found in Homo sapiens (Human).